We begin with the raw amino-acid sequence, 366 residues long: Putative actin-9 (366 aa).

This sequence belongs to the actin family. In terms of assembly, polymerization of globular actin (G-actin) leads to a structural filament (F-actin) in the form of a two-stranded helix. The binding of profilin to monomeric G-actin cause the sequestration of actin into profilactin complexes, and prevents the polymerization.

Its subcellular location is the cytoplasm. The protein resides in the cytoskeleton. In terms of biological role, actins are highly conserved proteins that are involved in various types of cell motility and are ubiquitously expressed in all eukaryotic cells. Essential component of cell cytoskeleton; plays an important role in cytoplasmic streaming, cell shape determination, cell division, organelle movement and extension growth. This is Putative actin-9 (ACT9) from Arabidopsis thaliana (Mouse-ear cress).